The primary structure comprises 130 residues: Small ribosomal subunit protein uS8 (130 aa).

This sequence belongs to the universal ribosomal protein uS8 family. In terms of assembly, part of the 30S ribosomal subunit.

Functionally, one of the primary rRNA binding proteins, it binds directly to 16S rRNA central domain where it helps coordinate assembly of the platform of the 30S subunit. The chain is Small ribosomal subunit protein uS8 from Pyrococcus abyssi (strain GE5 / Orsay).